The following is a 494-amino-acid chain: Ketol-acid reductoisomerase (NADP(+)) (494 aa).

In terms of domain architecture, KARI N-terminal Rossmann spans 14–208 (LDQLGRCRFM…GGHRAGCLES (195 aa)). NADP(+) is bound by residues 45 to 48 (CGAQ), R68, R76, S78, and 108 to 110 (DKQ). H132 is an active-site residue. NADP(+) is bound at residue G158. KARI C-terminal knotted domains lie at 209–344 (SFVA…NYPS) and 345–487 (TDVE…MTDM). Mg(2+) contacts are provided by D217, E221, E389, and E393. Residue S414 coordinates substrate.

Belongs to the ketol-acid reductoisomerase family. It depends on Mg(2+) as a cofactor.

The catalysed reaction is (2R)-2,3-dihydroxy-3-methylbutanoate + NADP(+) = (2S)-2-acetolactate + NADPH + H(+). It carries out the reaction (2R,3R)-2,3-dihydroxy-3-methylpentanoate + NADP(+) = (S)-2-ethyl-2-hydroxy-3-oxobutanoate + NADPH + H(+). It functions in the pathway amino-acid biosynthesis; L-isoleucine biosynthesis; L-isoleucine from 2-oxobutanoate: step 2/4. The protein operates within amino-acid biosynthesis; L-valine biosynthesis; L-valine from pyruvate: step 2/4. Functionally, involved in the biosynthesis of branched-chain amino acids (BCAA). Catalyzes an alkyl-migration followed by a ketol-acid reduction of (S)-2-acetolactate (S2AL) to yield (R)-2,3-dihydroxy-isovalerate. In the isomerase reaction, S2AL is rearranged via a Mg-dependent methyl migration to produce 3-hydroxy-3-methyl-2-ketobutyrate (HMKB). In the reductase reaction, this 2-ketoacid undergoes a metal-dependent reduction by NADPH to yield (R)-2,3-dihydroxy-isovalerate. The chain is Ketol-acid reductoisomerase (NADP(+)) from Vibrio vulnificus (strain CMCP6).